Reading from the N-terminus, the 568-residue chain is 2-succinyl-5-enolpyruvyl-6-hydroxy-3-cyclohexene-1-carboxylate synthase (568 aa).

It belongs to the TPP enzyme family. MenD subfamily. As to quaternary structure, homodimer. Mg(2+) is required as a cofactor. It depends on Mn(2+) as a cofactor. The cofactor is thiamine diphosphate.

It carries out the reaction isochorismate + 2-oxoglutarate + H(+) = 5-enolpyruvoyl-6-hydroxy-2-succinyl-cyclohex-3-ene-1-carboxylate + CO2. It participates in quinol/quinone metabolism; 1,4-dihydroxy-2-naphthoate biosynthesis; 1,4-dihydroxy-2-naphthoate from chorismate: step 2/7. It functions in the pathway cofactor biosynthesis; phylloquinone biosynthesis. Functionally, catalyzes the thiamine diphosphate-dependent decarboxylation of 2-oxoglutarate and the subsequent addition of the resulting succinic semialdehyde-thiamine pyrophosphate anion to isochorismate to yield 2-succinyl-5-enolpyruvyl-6-hydroxy-3-cyclohexene-1-carboxylate (SEPHCHC). This is 2-succinyl-5-enolpyruvyl-6-hydroxy-3-cyclohexene-1-carboxylate synthase from Synechococcus sp. (strain CC9902).